Consider the following 220-residue polypeptide: Translin-1 (220 aa).

It belongs to the translin family. In terms of assembly, forms an octameric ring-shaped structure, which is capable of binding DNA or RNA.

The protein resides in the cytoplasm. The protein localises to the nucleus. Functionally, DNA-binding protein that specifically recognizes consensus sequences at the breakpoint junctions in chromosomal translocations. Selectively binds single-stranded d(GT)n and d(GTT)n microsatellite repeats. Has much higher affinities for the homologous RNA sequences (GU)n and (GUU)n. Does not bind double-stranded DNA. Has a role in meiosis. This chain is Translin-1 (tsn1), found in Schizosaccharomyces pombe (strain 972 / ATCC 24843) (Fission yeast).